The following is an 819-amino-acid chain: Putative U-box domain-containing protein 53 (819 aa).

2 disordered regions span residues Thr-208–Phe-309 and Lys-398–Leu-433. Low complexity predominate over residues Glu-223–Ser-237. A compositionally biased stretch (polar residues) spans Asp-238 to Pro-260. Residues Asp-278 to Ser-296 are compositionally biased toward basic and acidic residues. The segment covering Pro-297–Pro-307 has biased composition (polar residues). A coiled-coil region spans residues Ile-395–Ser-437. Residues Phe-460–Leu-728 form the Protein kinase domain. Residues Ile-466–Val-474 and Lys-487 each bind ATP. Asp-582 (proton acceptor) is an active-site residue. One can recognise a U-box domain in the interval Gln-748–Gln-819.

The protein belongs to the protein kinase superfamily. Ser/Thr protein kinase family.

The enzyme catalyses L-seryl-[protein] + ATP = O-phospho-L-seryl-[protein] + ADP + H(+). It catalyses the reaction L-threonyl-[protein] + ATP = O-phospho-L-threonyl-[protein] + ADP + H(+). It carries out the reaction S-ubiquitinyl-[E2 ubiquitin-conjugating enzyme]-L-cysteine + [acceptor protein]-L-lysine = [E2 ubiquitin-conjugating enzyme]-L-cysteine + N(6)-ubiquitinyl-[acceptor protein]-L-lysine.. It functions in the pathway protein modification; protein ubiquitination. Its function is as follows. Functions as an E3 ubiquitin ligase. This chain is Putative U-box domain-containing protein 53 (PUB53), found in Arabidopsis thaliana (Mouse-ear cress).